The following is a 98-amino-acid chain: Large ribosomal subunit protein bL28 (98 aa).

Belongs to the bacterial ribosomal protein bL28 family.

This chain is Large ribosomal subunit protein bL28, found in Bartonella bacilliformis (strain ATCC 35685 / KC583 / Herrer 020/F12,63).